The following is a 312-amino-acid chain: tRNA dimethylallyltransferase (312 aa).

An ATP-binding site is contributed by G12 to S19. T14 to S19 is a binding site for substrate. Interaction with substrate tRNA regions lie at residues D38–L41 and Q162–R166.

It belongs to the IPP transferase family. Monomer. Mg(2+) is required as a cofactor.

It catalyses the reaction adenosine(37) in tRNA + dimethylallyl diphosphate = N(6)-dimethylallyladenosine(37) in tRNA + diphosphate. In terms of biological role, catalyzes the transfer of a dimethylallyl group onto the adenine at position 37 in tRNAs that read codons beginning with uridine, leading to the formation of N6-(dimethylallyl)adenosine (i(6)A). The polypeptide is tRNA dimethylallyltransferase (Buchnera aphidicola subsp. Cinara cedri (strain Cc)).